The chain runs to 194 residues: Inosine triphosphate pyrophosphatase (194 aa).

Position 10–15 (10–15) interacts with ITP; sequence TTNLKK. E36 contributes to the Mg(2+) binding site. Residues K48, 66 to 67, K83, K166, and 171 to 172 each bind ITP; these read DT and HR.

It belongs to the HAM1 NTPase family. As to quaternary structure, homodimer. It depends on Mg(2+) as a cofactor. Mn(2+) serves as cofactor.

It is found in the cytoplasm. The protein resides in the nucleus. The enzyme catalyses ITP + H2O = IMP + diphosphate + H(+). It catalyses the reaction dITP + H2O = dIMP + diphosphate + H(+). The catalysed reaction is XTP + H2O = XMP + diphosphate + H(+). In terms of biological role, pyrophosphatase that hydrolyzes non-canonical purine nucleotides such as inosine triphosphate (ITP), deoxyinosine triphosphate (dITP) or xanthosine 5'-triphosphate (XTP) to their respective monophosphate derivatives. The enzyme does not distinguish between the deoxy- and ribose forms. Probably excludes non-canonical purines from RNA and DNA precursor pools, thus preventing their incorporation into RNA and DNA and avoiding chromosomal lesions. The polypeptide is Inosine triphosphate pyrophosphatase (Encephalitozoon intestinalis (strain ATCC 50506) (Microsporidian parasite)).